The following is a 459-amino-acid chain: Trigger factor (459 aa).

In terms of domain architecture, PPIase FKBP-type spans Gly166 to Pro245.

Belongs to the FKBP-type PPIase family. Tig subfamily.

The protein resides in the cytoplasm. It carries out the reaction [protein]-peptidylproline (omega=180) = [protein]-peptidylproline (omega=0). Its function is as follows. Involved in protein export. Acts as a chaperone by maintaining the newly synthesized protein in an open conformation. Functions as a peptidyl-prolyl cis-trans isomerase. The polypeptide is Trigger factor (Bifidobacterium longum subsp. infantis (strain ATCC 15697 / DSM 20088 / JCM 1222 / NCTC 11817 / S12)).